A 688-amino-acid polypeptide reads, in one-letter code: Methionine--tRNA ligase (688 aa).

Residues 13 to 23 (PYANGQIHIGH) carry the 'HIGH' region motif. Positions 144, 147, 157, and 160 each coordinate Zn(2+). A 'KMSKS' region motif is present at residues 335–339 (KMSKS). Lys338 serves as a coordination point for ATP. One can recognise a tRNA-binding domain in the interval 582–688 (DFAKIDLRVA…SGAVPGMRIG (107 aa)).

It belongs to the class-I aminoacyl-tRNA synthetase family. MetG type 1 subfamily. Homodimer. It depends on Zn(2+) as a cofactor.

The protein resides in the cytoplasm. The catalysed reaction is tRNA(Met) + L-methionine + ATP = L-methionyl-tRNA(Met) + AMP + diphosphate. In terms of biological role, is required not only for elongation of protein synthesis but also for the initiation of all mRNA translation through initiator tRNA(fMet) aminoacylation. This is Methionine--tRNA ligase from Cupriavidus pinatubonensis (strain JMP 134 / LMG 1197) (Cupriavidus necator (strain JMP 134)).